The chain runs to 234 residues: Thiamine import ATP-binding protein ThiQ (234 aa).

In terms of domain architecture, ABC transporter spans 2–230 (LRFSDVKYRY…EKPPELTQYL (229 aa)). 32 to 39 (GPSGAGKS) lines the ATP pocket.

The protein belongs to the ABC transporter superfamily. Thiamine importer (TC 3.A.1.19.1) family. In terms of assembly, the complex is composed of two ATP-binding proteins (ThiQ), two transmembrane proteins (ThiP) and a solute-binding protein (ThiB).

The protein resides in the cell inner membrane. The catalysed reaction is thiamine(out) + ATP + H2O = thiamine(in) + ADP + phosphate + H(+). Part of the ABC transporter complex ThiBPQ involved in thiamine import. Responsible for energy coupling to the transport system. The protein is Thiamine import ATP-binding protein ThiQ of Aliivibrio fischeri (strain ATCC 700601 / ES114) (Vibrio fischeri).